An 87-amino-acid chain; its full sequence is Small ribosomal subunit protein bS20 (87 aa).

The protein belongs to the bacterial ribosomal protein bS20 family.

In terms of biological role, binds directly to 16S ribosomal RNA. The protein is Small ribosomal subunit protein bS20 of Sphingopyxis alaskensis (strain DSM 13593 / LMG 18877 / RB2256) (Sphingomonas alaskensis).